A 357-amino-acid chain; its full sequence is Actin, cytoplasmic (357 aa).

Belongs to the actin family. Post-translationally, met-1 may be removed after translation.

The protein localises to the cytoplasm. Its subcellular location is the cytoskeleton. It catalyses the reaction ATP + H2O = ADP + phosphate + H(+). Actins are highly conserved proteins that are involved in various types of cell motility and are ubiquitously expressed in all eukaryotic cells. This Oxytricha fallax protein is Actin, cytoplasmic.